Here is a 230-residue protein sequence, read N- to C-terminus: Ribonuclease 3 (230 aa).

In terms of domain architecture, RNase III spans 5–125 (YSRFYNILGY…VIGAIYLDSD (121 aa)). Glu-40 serves as a coordination point for Mg(2+). Asp-44 is an active-site residue. 2 residues coordinate Mg(2+): Asp-111 and Glu-114. Residue Glu-114 is part of the active site. Residues 153-223 (DSKSKLQEIL…AEKMIEMLSQ (71 aa)) enclose the DRBM domain.

This sequence belongs to the ribonuclease III family. As to quaternary structure, homodimer. Requires Mg(2+) as cofactor.

The protein resides in the cytoplasm. It catalyses the reaction Endonucleolytic cleavage to 5'-phosphomonoester.. In terms of biological role, digests double-stranded RNA. Involved in the processing of primary rRNA transcript to yield the immediate precursors to the large and small rRNAs (23S and 16S). Processes some mRNAs, and tRNAs when they are encoded in the rRNA operon. Processes pre-crRNA and tracrRNA of type II CRISPR loci if present in the organism. The sequence is that of Ribonuclease 3 from Francisella tularensis subsp. holarctica (strain LVS).